The chain runs to 177 residues: Large ribosomal subunit protein uL6 (177 aa).

The protein belongs to the universal ribosomal protein uL6 family. Part of the 50S ribosomal subunit.

Its function is as follows. This protein binds to the 23S rRNA, and is important in its secondary structure. It is located near the subunit interface in the base of the L7/L12 stalk, and near the tRNA binding site of the peptidyltransferase center. The sequence is that of Large ribosomal subunit protein uL6 from Cupriavidus taiwanensis (strain DSM 17343 / BCRC 17206 / CCUG 44338 / CIP 107171 / LMG 19424 / R1) (Ralstonia taiwanensis (strain LMG 19424)).